Here is a 378-residue protein sequence, read N- to C-terminus: Succinyl-diaminopimelate desuccinylase (378 aa).

His-68 lines the Zn(2+) pocket. Asp-70 is a catalytic residue. Asp-101 provides a ligand contact to Zn(2+). Glu-135 (proton acceptor) is an active-site residue. Positions 136, 164, and 350 each coordinate Zn(2+).

Belongs to the peptidase M20A family. DapE subfamily. Homodimer. The cofactor is Zn(2+). It depends on Co(2+) as a cofactor.

It catalyses the reaction N-succinyl-(2S,6S)-2,6-diaminopimelate + H2O = (2S,6S)-2,6-diaminopimelate + succinate. It functions in the pathway amino-acid biosynthesis; L-lysine biosynthesis via DAP pathway; LL-2,6-diaminopimelate from (S)-tetrahydrodipicolinate (succinylase route): step 3/3. Functionally, catalyzes the hydrolysis of N-succinyl-L,L-diaminopimelic acid (SDAP), forming succinate and LL-2,6-diaminopimelate (DAP), an intermediate involved in the bacterial biosynthesis of lysine and meso-diaminopimelic acid, an essential component of bacterial cell walls. In Acinetobacter baumannii (strain ACICU), this protein is Succinyl-diaminopimelate desuccinylase.